A 178-amino-acid chain; its full sequence is Bifunctional protein PyrR (178 aa).

Residues 41-42 (RR), 103-111 (DDVLYTGRT), and R136 each bind substrate. Residues 99–111 (VILVDDVLYTGRT) carry the PRPP-binding motif.

The protein belongs to the purine/pyrimidine phosphoribosyltransferase family. PyrR subfamily. In terms of assembly, homodimer and homohexamer; in equilibrium.

The catalysed reaction is UMP + diphosphate = 5-phospho-alpha-D-ribose 1-diphosphate + uracil. Regulates transcriptional attenuation of the pyrimidine nucleotide (pyr) operon by binding in a uridine-dependent manner to specific sites on pyr mRNA. This disrupts an antiterminator hairpin in the RNA and favors formation of a downstream transcription terminator, leading to a reduced expression of downstream genes. In terms of biological role, also displays a weak uracil phosphoribosyltransferase activity which is not physiologically significant. The protein is Bifunctional protein PyrR of Clostridium acetobutylicum (strain ATCC 824 / DSM 792 / JCM 1419 / IAM 19013 / LMG 5710 / NBRC 13948 / NRRL B-527 / VKM B-1787 / 2291 / W).